The chain runs to 690 residues: Guanylate cyclase soluble subunit alpha-1 (690 aa).

Ser-267 is modified (phosphoserine). One can recognise a Guanylate cyclase domain in the interval 481 to 608 (TMLFSDIVGF…NNVTLANKFE (128 aa)).

It belongs to the adenylyl cyclase class-4/guanylyl cyclase family. In terms of assembly, the active enzyme is formed by a heterodimer of an alpha and a beta subunit. Heterodimer with GUCY1B1. Mg(2+) serves as cofactor. The cofactor is Mn(2+).

The protein localises to the cytoplasm. It catalyses the reaction GTP = 3',5'-cyclic GMP + diphosphate. With respect to regulation, activated by nitric oxide in the presence of magnesium or manganese ions. In Canis lupus familiaris (Dog), this protein is Guanylate cyclase soluble subunit alpha-1 (GUCY1A1).